Reading from the N-terminus, the 318-residue chain is Deoxymugineic acid synthase 1 (318 aa).

Asp-48 contacts NADP(+). The active-site Proton donor is the Tyr-53. His-116 serves as a coordination point for substrate. NADP(+)-binding positions include 162 to 163 (CN), Gln-184, 262 to 270 (FDEARMREN), and 277 to 285 (ELTEEERQR).

The protein belongs to the aldo/keto reductase family. In terms of tissue distribution, confined to cells participating in long distance transport (e.g. in the parts of pericycle cells adjacent to the protoxylem and metaxylem) in roots and to vascular bundles in shoots.

It carries out the reaction 2'-deoxymugineate + NAD(+) = 3''-deamino-3''-oxonicotianamine + NADH + H(+). It catalyses the reaction 2'-deoxymugineate + NADP(+) = 3''-deamino-3''-oxonicotianamine + NADPH + H(+). It participates in siderophore biosynthesis. Functionally, catalyzes the reduction of a 3''-keto intermediate during the biosynthesis of 2'-deoxymugineic acid (DMA) from L-Met. Involved in the formation of phytosiderophores (MAs) belonging to the mugineic acid family and required to acquire iron. This is Deoxymugineic acid synthase 1 from Oryza sativa subsp. japonica (Rice).